Consider the following 466-residue polypeptide: Chromogranin-A (466 aa).

An N-terminal signal peptide occupies residues methionine 1–alanine 18. Residues cysteine 35 and cysteine 56 are joined by a disulfide bond. The interval alanine 91 to leucine 443 is disordered. A compositionally biased stretch (low complexity) spans glutamine 92–glutamine 111. Serine 114 bears the Phosphoserine mark. A compositionally biased stretch (basic and acidic residues) spans lysine 131–glutamine 155. A compositionally biased stretch (polar residues) spans glutamate 177–glutamate 213. Serine 215 bears the Phosphoserine mark. Residues lysine 233–lysine 247 are compositionally biased toward acidic residues. Over residues glutamate 248–proline 259 the composition is skewed to basic and acidic residues. Serine 288 and serine 312 each carry phosphoserine. Over residues glycine 305–glutamine 314 the composition is skewed to basic and acidic residues. Glycine 332 bears the Glycine amide mark. The segment covering arginine 351–glutamate 378 has biased composition (basic and acidic residues). 2 positions are modified to phosphoserine: serine 353 and serine 386. Methionine 387 carries the methionine sulfoxide modification. The span at serine 412 to aspartate 440 shows a compositional bias: basic and acidic residues. Phosphoserine occurs at positions 413, 417, and 433. The O-linked (Xyl...) (chondroitin sulfate) serine glycan is linked to serine 433. At glutamine 441 the chain carries Pyrrolidone carboxylic acid. Serine 447 is modified (phosphoserine).

Belongs to the chromogranin/secretogranin protein family. In terms of assembly, self-interacts; self-assembly is promoted in vitro by chondroitin sulfate attachment which occurs at mildly acidic pH conditions. Interacts with SCG3; this interaction is optimal in conditions mimicking the lumenal milieu of the trans-Golgi network, i.e. pH 5.5 and 10 mM Ca(+2). Interacts with ITPR1 in the secretory granules. Post-translationally, O-glycosylated; contains chondroitin sulfate (CS). CS attachment is pH-dependent, being observed at mildly acidic conditions of pH 5 but not at neutral pH, and promotes self-assembly in vitro. As to expression, expressed in the brain and adrenal and pituitary glands.

The protein resides in the cytoplasmic vesicle. The protein localises to the secretory vesicle. It localises to the neuronal dense core vesicle. Its subcellular location is the secreted. Strongly inhibits glucose induced insulin release from the pancreas. Its function is as follows. Catestatin inhibits catecholamine release from chromaffin cells and noradrenergic neurons by acting as a non-competitive nicotinic cholinergic antagonist. Can induce mast cell migration, degranulation and production of cytokines and chemokines. In terms of biological role, serpinin regulates granule biogenesis in endocrine cells by up-regulating the transcription of protease nexin 1 (SERPINE2) via a cAMP-PKA-SP1 pathway. This leads to inhibition of granule protein degradation in the Golgi complex which in turn promotes granule formation. Serpinin and pGlu-serpinin can enhance both myocardial contractility (inotropy) and relaxation (lusitropy) and this cardio-stimulation requires a beta 1-adrenergic receptor/adenylate cyclase/cAMP/PKA pathway. The protein is Chromogranin-A (Chga) of Rattus norvegicus (Rat).